Reading from the N-terminus, the 465-residue chain is Asparagine--tRNA ligase (465 aa).

The protein belongs to the class-II aminoacyl-tRNA synthetase family. As to quaternary structure, homodimer.

The protein resides in the cytoplasm. The catalysed reaction is tRNA(Asn) + L-asparagine + ATP = L-asparaginyl-tRNA(Asn) + AMP + diphosphate + H(+). The polypeptide is Asparagine--tRNA ligase (Pseudoalteromonas translucida (strain TAC 125)).